We begin with the raw amino-acid sequence, 201 residues long: dITP/XTP pyrophosphatase (201 aa).

7–12 (SNNAHK) provides a ligand contact to substrate. The Proton acceptor role is filled by Asp-72. Asp-72 provides a ligand contact to Mg(2+). Residues Ser-73, 154–157 (FGYD), Lys-177, and 182–183 (HR) contribute to the substrate site.

The protein belongs to the HAM1 NTPase family. As to quaternary structure, homodimer. Requires Mg(2+) as cofactor.

It catalyses the reaction XTP + H2O = XMP + diphosphate + H(+). The catalysed reaction is dITP + H2O = dIMP + diphosphate + H(+). It carries out the reaction ITP + H2O = IMP + diphosphate + H(+). In terms of biological role, pyrophosphatase that catalyzes the hydrolysis of nucleoside triphosphates to their monophosphate derivatives, with a high preference for the non-canonical purine nucleotides XTP (xanthosine triphosphate), dITP (deoxyinosine triphosphate) and ITP. Seems to function as a house-cleaning enzyme that removes non-canonical purine nucleotides from the nucleotide pool, thus preventing their incorporation into DNA/RNA and avoiding chromosomal lesions. The protein is dITP/XTP pyrophosphatase of Leuconostoc mesenteroides subsp. mesenteroides (strain ATCC 8293 / DSM 20343 / BCRC 11652 / CCM 1803 / JCM 6124 / NCDO 523 / NBRC 100496 / NCIMB 8023 / NCTC 12954 / NRRL B-1118 / 37Y).